The sequence spans 421 residues: Carboxypeptidase A4 (421 aa).

Residues 1 to 16 (MRWILFIGALIGSSIC) form the signal peptide. A propeptide spans 17–113 (GQEKFFGDQV…EMQHNEGQER (97 aa)) (activation peptide). Residues P69, V71, N119, Y123, H124, S125, E127, and F163 each contribute to the a protein site. Residues 122-416 (AYHSLEAIYH…LGLKTIMEHV (295 aa)) form the Peptidase M14 domain. Positions 181 and 184 each coordinate Zn(2+). R196, K197, and S248 together coordinate a protein. A disulfide bond links C250 and C273. Residue N260 is glycosylated (N-linked (GlcNAc...) asparagine). D270 lines the a protein pocket. H308 is a Zn(2+) binding site. The active-site Proton donor/acceptor is E382.

The protein belongs to the peptidase M14 family. Monomer. Interacts with LXN. The cofactor is Zn(2+). Fetal expression in the adrenal gland, brain, heart, intestine, kidney, liver and lung. Except for fetal brain that shows no imprinting, expression was found preferentially from the maternal allele.

Its subcellular location is the secreted. Its activity is regulated as follows. Inhibited by interaction with the metallocarboxypeptidase inhibitor (MCPI) from N.versicolor that binds to the catalytic zinc ion. Also inhibited by interaction with the S.magnifica carboxypeptidase inhibitor SmCI that penetrates the active site groove and inhibits activity by emulating a C-terminal substrate. Additionally inhibited by a carboxypeptidase inhibitor from H.medicinalis (leech) and R.bursa (tick). Functionally, metalloprotease that cleaves hydrophobic C-terminal residues with a preference for -Phe, -Leu, -Ile, -Met, -Tyr and -Val. May function in peptide hormone and/or neuropeptide catabolism. The chain is Carboxypeptidase A4 (CPA4) from Homo sapiens (Human).